Reading from the N-terminus, the 419-residue chain is D-inositol 3-phosphate glycosyltransferase (419 aa).

His-9 lines the 1D-myo-inositol 3-phosphate pocket. UDP-N-acetyl-alpha-D-glucosamine is bound by residues 15 to 16 (QP) and Gly-23. 1D-myo-inositol 3-phosphate contacts are provided by residues 20–25 (DAGGMN), Lys-78, Tyr-110, Thr-134, and Arg-154. Arg-231, Lys-236, and Arg-295 together coordinate UDP-N-acetyl-alpha-D-glucosamine. 3 residues coordinate Mg(2+): Tyr-304, Arg-305, and Ala-307. Residues Glu-317 and Glu-325 each coordinate UDP-N-acetyl-alpha-D-glucosamine. Thr-331 serves as a coordination point for Mg(2+).

The protein belongs to the glycosyltransferase group 1 family. MshA subfamily. Homodimer.

It carries out the reaction 1D-myo-inositol 3-phosphate + UDP-N-acetyl-alpha-D-glucosamine = 1D-myo-inositol 2-acetamido-2-deoxy-alpha-D-glucopyranoside 3-phosphate + UDP + H(+). In terms of biological role, catalyzes the transfer of a N-acetyl-glucosamine moiety to 1D-myo-inositol 3-phosphate to produce 1D-myo-inositol 2-acetamido-2-deoxy-glucopyranoside 3-phosphate in the mycothiol biosynthesis pathway. The sequence is that of D-inositol 3-phosphate glycosyltransferase from Corynebacterium jeikeium (strain K411).